The chain runs to 309 residues: D-alanine--D-alanine ligase (309 aa).

The ATP-grasp domain maps to 105-304; it reads KQIWHSVGLP…FNDLVERILA (200 aa). 135 to 190 provides a ligand contact to ATP; it reads LQELGGRVIVKPAREGSSIGMSIADNGRSLALALQHAAEFDDDLLVEQWVEGAEYT. Residues aspartate 258, glutamate 271, and asparagine 273 each coordinate Mg(2+).

The protein belongs to the D-alanine--D-alanine ligase family. The cofactor is Mg(2+). It depends on Mn(2+) as a cofactor.

The protein localises to the cytoplasm. It carries out the reaction 2 D-alanine + ATP = D-alanyl-D-alanine + ADP + phosphate + H(+). The protein operates within cell wall biogenesis; peptidoglycan biosynthesis. Functionally, cell wall formation. The chain is D-alanine--D-alanine ligase from Idiomarina loihiensis (strain ATCC BAA-735 / DSM 15497 / L2-TR).